Reading from the N-terminus, the 959-residue chain is Isoleucine--tRNA ligase (959 aa).

Residues 66–76 carry the 'HIGH' region motif; sequence PYANGDIHIGH. Glu592 is a binding site for L-isoleucyl-5'-AMP. A 'KMSKS' region motif is present at residues 633 to 637; that stretch reads KMSKS. Residue Lys636 participates in ATP binding. Zn(2+) contacts are provided by Cys922, Cys925, Cys942, and Cys945.

It belongs to the class-I aminoacyl-tRNA synthetase family. IleS type 1 subfamily. As to quaternary structure, monomer. Zn(2+) serves as cofactor.

The protein resides in the cytoplasm. It catalyses the reaction tRNA(Ile) + L-isoleucine + ATP = L-isoleucyl-tRNA(Ile) + AMP + diphosphate. Its function is as follows. Catalyzes the attachment of isoleucine to tRNA(Ile). As IleRS can inadvertently accommodate and process structurally similar amino acids such as valine, to avoid such errors it has two additional distinct tRNA(Ile)-dependent editing activities. One activity is designated as 'pretransfer' editing and involves the hydrolysis of activated Val-AMP. The other activity is designated 'posttransfer' editing and involves deacylation of mischarged Val-tRNA(Ile). This chain is Isoleucine--tRNA ligase, found in Cupriavidus metallidurans (strain ATCC 43123 / DSM 2839 / NBRC 102507 / CH34) (Ralstonia metallidurans).